A 356-amino-acid chain; its full sequence is S-adenosylmethionine:tRNA ribosyltransferase-isomerase (356 aa).

It belongs to the QueA family. As to quaternary structure, monomer.

The protein resides in the cytoplasm. It catalyses the reaction 7-aminomethyl-7-carbaguanosine(34) in tRNA + S-adenosyl-L-methionine = epoxyqueuosine(34) in tRNA + adenine + L-methionine + 2 H(+). It functions in the pathway tRNA modification; tRNA-queuosine biosynthesis. Transfers and isomerizes the ribose moiety from AdoMet to the 7-aminomethyl group of 7-deazaguanine (preQ1-tRNA) to give epoxyqueuosine (oQ-tRNA). The sequence is that of S-adenosylmethionine:tRNA ribosyltransferase-isomerase from Xanthomonas axonopodis pv. citri (strain 306).